Reading from the N-terminus, the 142-residue chain is Large ribosomal subunit protein uL13 (142 aa).

Belongs to the universal ribosomal protein uL13 family. In terms of assembly, part of the 50S ribosomal subunit.

Functionally, this protein is one of the early assembly proteins of the 50S ribosomal subunit, although it is not seen to bind rRNA by itself. It is important during the early stages of 50S assembly. This Salmonella agona (strain SL483) protein is Large ribosomal subunit protein uL13.